The primary structure comprises 265 residues: MSAFVITTEQVWLDKYKYDDAEKQYYENLSMGSASNKPHNSPQSAASALSNSGDGSELAARVANLEQENQSLHKVVKDLQSAISKLESRLSTLEKSSKSQKPAAASQPAIEVAARVQKVQVTPAAKEENGTGEDDDDDDDIDLFGSDNEEEDAEAARIREERLKQYAEKKSKKPGVIAKSSILLDVKPWDDETDMAKLEECVRTVQMDGLVWGSSKLVPVGYGIKKLQIQCVVEDDKVGTDILEEEITKFEDYVQSVDIAAFNKI.

Residues 31-54 show a composition bias toward polar residues; that stretch reads MGSASNKPHNSPQSAASALSNSGD. Disordered stretches follow at residues 31–64 and 118–155; these read MGSASNKPHNSPQSAASALSNSGDGSELAARVAN and KVQVTPAAKEENGTGEDDDDDDDIDLFGSDNEEEDAEA. Over residues 130–153 the composition is skewed to acidic residues; the sequence is GTGEDDDDDDDIDLFGSDNEEEDA.

The protein belongs to the EF-1-beta/EF-1-delta family. EF-1 is composed of 4 subunits: alpha, beta, delta, and gamma.

In terms of biological role, EF-1-beta and EF-1-delta stimulate the exchange of GDP bound to EF-1-alpha to GTP. This is Elongation factor 1-delta (eef1d) from Xenopus laevis (African clawed frog).